We begin with the raw amino-acid sequence, 486 residues long: Cardiolipin synthase A (486 aa).

2 helical membrane-spanning segments follow: residues 3 to 23 and 38 to 58; these read TFYTVISWLLVFGYWLLIAGV and MAWLLVIYILPLVGIVAYLSF. PLD phosphodiesterase domains follow at residues 219–246 and 399–426; these read MDLRQHRKIILIDNRIAYTGSMNMVDPR and KDGLLHTKSVLVDGQLSLVGTVNLDMRS. Active-site residues include histidine 224, lysine 226, aspartate 231, histidine 404, lysine 406, and aspartate 411.

Belongs to the phospholipase D family. Cardiolipin synthase subfamily. ClsA sub-subfamily.

The protein resides in the cell inner membrane. It carries out the reaction 2 a 1,2-diacyl-sn-glycero-3-phospho-(1'-sn-glycerol) = a cardiolipin + glycerol. Functionally, catalyzes the reversible phosphatidyl group transfer from one phosphatidylglycerol molecule to another to form cardiolipin (CL) (diphosphatidylglycerol) and glycerol. In Pectobacterium carotovorum subsp. carotovorum (strain PC1), this protein is Cardiolipin synthase A.